The primary structure comprises 124 residues: Putative iron-sulfur cluster insertion protein ErpA (124 aa).

3 residues coordinate iron-sulfur cluster: cysteine 52, cysteine 116, and cysteine 118.

This sequence belongs to the HesB/IscA family. Homodimer. Requires iron-sulfur cluster as cofactor.

Its function is as follows. Required for insertion of 4Fe-4S clusters. This chain is Putative iron-sulfur cluster insertion protein ErpA, found in Ralstonia pickettii (strain 12J).